A 313-amino-acid chain; its full sequence is MIGRHKHCIALEDFSREEILEVIDLAASMKEVLQRPIKKVPSLRGKMVVNLFFEASTRTRSSFETAAKILSADALNWTSSSSSVTKGETLVDTARNLEAMRPDVLVIRHSAGGAPRLVAEHVGCSVVSAGDGAHEHPSQGLLDCFTLREKLGTLEGKTVAIVGDVSHSRVARSDLHAFPKLGAKVRLCGPPTMMPAGVERLGATVHTDLREAVDGADAVIMLRIQHERIGDPLIPGTREYSKVWGLNAKKAADWLKPSCVILHPGPINRGVELSPEVADGPRSVILDQVQNGVAVRMAILYLLAGGAGEEARA.

Carbamoyl phosphate contacts are provided by Arg58 and Thr59. Lys86 is a binding site for L-aspartate. Arg108, His136, and Gln139 together coordinate carbamoyl phosphate. Residues Arg169 and Arg223 each coordinate L-aspartate. Positions 265 and 266 each coordinate carbamoyl phosphate.

The protein belongs to the aspartate/ornithine carbamoyltransferase superfamily. ATCase family. Heterododecamer (2C3:3R2) of six catalytic PyrB chains organized as two trimers (C3), and six regulatory PyrI chains organized as three dimers (R2).

It carries out the reaction carbamoyl phosphate + L-aspartate = N-carbamoyl-L-aspartate + phosphate + H(+). It functions in the pathway pyrimidine metabolism; UMP biosynthesis via de novo pathway; (S)-dihydroorotate from bicarbonate: step 2/3. Functionally, catalyzes the condensation of carbamoyl phosphate and aspartate to form carbamoyl aspartate and inorganic phosphate, the committed step in the de novo pyrimidine nucleotide biosynthesis pathway. This is Aspartate carbamoyltransferase catalytic subunit from Anaeromyxobacter sp. (strain K).